The chain runs to 154 residues: 6,7-dimethyl-8-ribityllumazine synthase (154 aa).

5-amino-6-(D-ribitylamino)uracil is bound by residues F23, 57-59, and 81-83; these read AFE and AVI. 86–87 contacts (2S)-2-hydroxy-3-oxobutyl phosphate; that stretch reads ST. H89 functions as the Proton donor in the catalytic mechanism. F114 provides a ligand contact to 5-amino-6-(D-ribitylamino)uracil. Residue R128 participates in (2S)-2-hydroxy-3-oxobutyl phosphate binding.

Belongs to the DMRL synthase family.

It catalyses the reaction (2S)-2-hydroxy-3-oxobutyl phosphate + 5-amino-6-(D-ribitylamino)uracil = 6,7-dimethyl-8-(1-D-ribityl)lumazine + phosphate + 2 H2O + H(+). It functions in the pathway cofactor biosynthesis; riboflavin biosynthesis; riboflavin from 2-hydroxy-3-oxobutyl phosphate and 5-amino-6-(D-ribitylamino)uracil: step 1/2. In terms of biological role, catalyzes the formation of 6,7-dimethyl-8-ribityllumazine by condensation of 5-amino-6-(D-ribitylamino)uracil with 3,4-dihydroxy-2-butanone 4-phosphate. This is the penultimate step in the biosynthesis of riboflavin. The protein is 6,7-dimethyl-8-ribityllumazine synthase of Syntrophotalea carbinolica (strain DSM 2380 / NBRC 103641 / GraBd1) (Pelobacter carbinolicus).